We begin with the raw amino-acid sequence, 200 residues long: Transcription elongation factor A protein-like 6 (200 aa).

The interval 1 to 200 (MEKPYNKNEG…QRGLHDIPYL (200 aa)) is disordered. The span at 20–36 (DEVEPDDEGKSDEEEKP) shows a compositional bias: acidic residues. Ser30 carries the post-translational modification Phosphoserine. 3 stretches are compositionally biased toward basic and acidic residues: residues 37–52 (DAEGKTECEGKRKAEG), 60–80 (LEDKGSQEKQGKSEGEGKPQG), and 115–154 (DRGTDDSPKDSQEDLQERHLSSEEMMRECGDVSRAQEELR). Position 65 is a phosphoserine (Ser65).

This sequence belongs to the TFS-II family. TFA subfamily.

It localises to the nucleus. Functionally, may be involved in transcriptional regulation. The sequence is that of Transcription elongation factor A protein-like 6 (TCEAL6) from Homo sapiens (Human).